We begin with the raw amino-acid sequence, 300 residues long: Transcription initiation factor IIB (300 aa).

Residues 2 to 34 (NKQKVCPACESAELIYDPERGEIVCAKCGYVIE) form a TFIIB-type zinc finger. Residues C7, C10, C26, and C29 each coordinate Zn(2+). A run of 2 repeats spans residues 114–197 (SELD…ARNL) and 210–291 (DYVN…ELVE).

The protein belongs to the TFIIB family.

Its function is as follows. Stabilizes TBP binding to an archaeal box-A promoter. Also responsible for recruiting RNA polymerase II to the pre-initiation complex (DNA-TBP-TFIIB). The sequence is that of Transcription initiation factor IIB from Pyrococcus furiosus (strain ATCC 43587 / DSM 3638 / JCM 8422 / Vc1).